The chain runs to 557 residues: Small ribosomal subunit protein bS1 (557 aa).

S1 motif domains follow at residues 21 to 87, 105 to 171, 192 to 260, 277 to 347, 364 to 434, and 451 to 520; these read GSIV…LSRE, SATV…VSRR, GMEV…LGLK, GTKL…LGLK, GDRV…LGVK, and GAIV…LSIR.

Belongs to the bacterial ribosomal protein bS1 family.

In terms of biological role, binds mRNA; thus facilitating recognition of the initiation point. It is needed to translate mRNA with a short Shine-Dalgarno (SD) purine-rich sequence. The sequence is that of Small ribosomal subunit protein bS1 (rpsA) from Dickeya dadantii (strain 3937) (Erwinia chrysanthemi (strain 3937)).